The sequence spans 251 residues: 7-cyano-7-deazaguanine synthase (251 aa).

Residues 1 to 21 are disordered; the sequence is MSDLPRHSPRRQHAGESAVTA. 35–45 contacts ATP; the sequence is YSGGMDSYTVL. 4 residues coordinate Zn(2+): Cys212, Cys220, Cys223, and Cys226.

Belongs to the QueC family. Requires Zn(2+) as cofactor.

The catalysed reaction is 7-carboxy-7-deazaguanine + NH4(+) + ATP = 7-cyano-7-deazaguanine + ADP + phosphate + H2O + H(+). The protein operates within purine metabolism; 7-cyano-7-deazaguanine biosynthesis. Catalyzes the ATP-dependent conversion of 7-carboxy-7-deazaguanine (CDG) to 7-cyano-7-deazaguanine (preQ(0)). This Chromohalobacter salexigens (strain ATCC BAA-138 / DSM 3043 / CIP 106854 / NCIMB 13768 / 1H11) protein is 7-cyano-7-deazaguanine synthase.